Reading from the N-terminus, the 693-residue chain is MA3 DOMAIN-CONTAINING TRANSLATION REGULATORY FACTOR 2 (693 aa).

The segment at Ser-25–Asp-60 is disordered. Residues Glu-90 to Lys-211 form the MI 1 domain. The Nuclear localization signal 1 motif lies at Glu-241–Asp-248. 3 MI domains span residues Asp-254–Ala-375, Val-389–Asn-510, and Glu-560–Gln-681. The Nuclear localization signal 2 motif lies at Val-430–Ala-437. The disordered stretch occupies residues Glu-673 to Gly-693. Residues Lys-683 to Gly-693 show a composition bias toward low complexity.

This sequence belongs to the PDCD4 family. Binds to EIF4A1. The association with ribosomes is modulated by cellular energy status and TOR activity. In terms of tissue distribution, mostly expressed in reproductive tissues, such as flower buds and flowers, and, to a lower extent, in vegetative tissues, such as leaves, roots and stems.

It is found in the nucleus. The protein localises to the cytoplasm. It localises to the cytosol. Functionally, involved in target of rapamycin (TOR)-regulated translation control, especially under energy-deficient conditions. This is MA3 DOMAIN-CONTAINING TRANSLATION REGULATORY FACTOR 2 from Arabidopsis thaliana (Mouse-ear cress).